The primary structure comprises 87 residues: Hemocyanin alpha chain (87 aa).

The protein belongs to the tyrosinase family. Hemocyanin subfamily. In terms of assembly, polymer that contains six different types of chains (alpha, beta, gamma, delta, epsilon, and zeta). In terms of tissue distribution, hemolymph.

It localises to the secreted. The protein localises to the extracellular space. Its function is as follows. Hemocyanins are copper-containing oxygen carriers occurring freely dissolved in the hemolymph of many mollusks and arthropods. The polypeptide is Hemocyanin alpha chain (Tachypleus tridentatus (Japanese horseshoe crab)).